Reading from the N-terminus, the 319-residue chain is Methionyl-tRNA formyltransferase (319 aa).

113 to 116 (SLLP) serves as a coordination point for (6S)-5,6,7,8-tetrahydrofolate.

This sequence belongs to the Fmt family.

The catalysed reaction is L-methionyl-tRNA(fMet) + (6R)-10-formyltetrahydrofolate = N-formyl-L-methionyl-tRNA(fMet) + (6S)-5,6,7,8-tetrahydrofolate + H(+). Attaches a formyl group to the free amino group of methionyl-tRNA(fMet). The formyl group appears to play a dual role in the initiator identity of N-formylmethionyl-tRNA by promoting its recognition by IF2 and preventing the misappropriation of this tRNA by the elongation apparatus. The polypeptide is Methionyl-tRNA formyltransferase (Pseudomonas fluorescens (strain ATCC BAA-477 / NRRL B-23932 / Pf-5)).